The following is a 147-amino-acid chain: 3-hydroxyacyl-[acyl-carrier-protein] dehydratase FabZ (147 aa).

Residue His48 is part of the active site.

It belongs to the thioester dehydratase family. FabZ subfamily.

The protein resides in the cytoplasm. It catalyses the reaction a (3R)-hydroxyacyl-[ACP] = a (2E)-enoyl-[ACP] + H2O. Functionally, involved in unsaturated fatty acids biosynthesis. Catalyzes the dehydration of short chain beta-hydroxyacyl-ACPs and long chain saturated and unsaturated beta-hydroxyacyl-ACPs. The protein is 3-hydroxyacyl-[acyl-carrier-protein] dehydratase FabZ of Aliarcobacter butzleri (strain RM4018) (Arcobacter butzleri).